Consider the following 472-residue polypeptide: Adenosylhomocysteinase (472 aa).

T62, D137, and E197 together coordinate substrate. T198 to T200 lines the NAD(+) pocket. Substrate-binding residues include K227 and D231. NAD(+) is bound by residues N232, G261–G266, E284, N319, I340–H342, and N385.

This sequence belongs to the adenosylhomocysteinase family. NAD(+) serves as cofactor.

The protein resides in the cytoplasm. It carries out the reaction S-adenosyl-L-homocysteine + H2O = L-homocysteine + adenosine. It participates in amino-acid biosynthesis; L-homocysteine biosynthesis; L-homocysteine from S-adenosyl-L-homocysteine: step 1/1. In terms of biological role, may play a key role in the regulation of the intracellular concentration of adenosylhomocysteine. The sequence is that of Adenosylhomocysteinase from Bordetella petrii (strain ATCC BAA-461 / DSM 12804 / CCUG 43448).